A 485-amino-acid chain; its full sequence is ETS translocation variant 4 (485 aa).

Residue K6 forms a Glycyl lysine isopeptide (Lys-Gly) (interchain with G-Cter in SUMO2) linkage. Disordered stretches follow at residues 79–114 (PDFH…RKPP) and 135–214 (IAIK…QHQL). A Glycyl lysine isopeptide (Lys-Gly) (interchain with G-Cter in SUMO) cross-link involves residue K95. Phosphoserine is present on S100. K138 participates in a covalent cross-link: Glycyl lysine isopeptide (Lys-Gly) (interchain with G-Cter in SUMO2). Phosphoserine occurs at positions 139 and 148. The segment covering 158-171 (QQQSLLRASSSSQS) has biased composition (low complexity). Position 215 is a phosphoserine (S215). Glycyl lysine isopeptide (Lys-Gly) (interchain with G-Cter in SUMO) cross-links involve residues K227 and K261. Residue K323 forms a Glycyl lysine isopeptide (Lys-Gly) (interchain with G-Cter in SUMO2) linkage. A DNA-binding region (ETS) is located at residues 342-422 (LQLWQFLVAL…AGERYVYKFV (81 aa)).

Belongs to the ETS family. In terms of processing, sumoylated; enhanced upon ERK/MAP kinase pathway activation it positively regulates the transcriptional activator capacity. Sumoylation at Lys-95 probably requires phosphorylation at Ser-100. Transiently polysumoylated and desumoylated by SENP1. Sumoylation is a prerequisite to polyubiquitination which in turn increases proteasomal-mediated degradation. Probably polyubiquitinated by RNF4 and deubiquitinated by USP2. Epididymis and brain.

Its subcellular location is the nucleus. Transcriptional activator. May play a role in keratinocyte differentiation. In Mus musculus (Mouse), this protein is ETS translocation variant 4 (Etv4).